A 970-amino-acid polypeptide reads, in one-letter code: Sodium/calcium exchanger 1 (970 aa).

An N-terminal signal peptide occupies residues 1-32; sequence MLRLRLSPTFSVGFHLLAFVPLLFSHVDLISA. At 33–71 the chain is on the extracellular side; the sequence is DTEMEGEGNETGECTGSYYCKKGVILPIWEPQDPSFGDK. Asn41 carries an N-linked (GlcNAc...) asparagine glycan. Residues 72-92 form a helical membrane-spanning segment; that stretch reads IARATVYFVAMVYMFLGVSII. Over 93 to 133 the chain is Cytoplasmic; the sequence is ADRFMSSIEVITSQEKEITIKKPNGETTKTTVRIWNETVSN. A helical membrane pass occupies residues 134–154; it reads LTLMALGSSAPEILLSVIEVC. The Alpha-1 repeat unit spans residues 138-178; it reads ALGSSAPEILLSVIEVCGHNFTAGDLGPSTIVGSAAFNMFI. The Extracellular portion of the chain corresponds to 155 to 167; it reads GHNFTAGDLGPST. Asn157 carries N-linked (GlcNAc...) asparagine glycosylation. The helical transmembrane segment at 168-188 threads the bilayer; it reads IVGSAAFNMFIIIALCVYVVP. Residues 189-201 are Cytoplasmic-facing; the sequence is DGETRKIKHLRVF. Residues 202-222 form a helical membrane-spanning segment; it reads FVTAAWSIFAYTWLYIILSVI. Over 223–228 the chain is Extracellular; that stretch reads SPGVVE. A helical membrane pass occupies residues 229-249; it reads VWEGLLTFFFFPICVVFAWVA. Residues 250–797 are Cytoplasmic-facing; it reads DRRLLFYKYV…FVPPTEYWNG (548 aa). Positions 251–270 are putative calmodulin-binding region; sequence RRLLFYKYVYKRYRAGKQRG. Residues Ser282 and Ser389 each carry the phosphoserine modification. 2 consecutive Calx-beta domains span residues 393 to 493 and 524 to 624; these read VNTE…VHLS and ATVT…LEIG. Ca(2+) is bound by residues Glu417, Asp453, Asp478, Asp479, Ile481, Glu483, Glu486, Asp530, Asp531, Asp532, Glu548, Asp584, Asp610, Glu611, Glu612, and Glu715. The chain crosses the membrane as a helical span at residues 798 to 818; it reads WACFIVSILMIGILTAFIGDL. Residues 819-821 lie on the Extracellular side of the membrane; the sequence is ASH. A helical membrane pass occupies residues 822–842; it reads FGCTIGLKDSVTAVVFVALGT. One copy of the Alpha-2 repeat lies at 839-875; sequence ALGTSVPDTFASKVAATQDQYADASIGNVTGSNAVNV. Residues 843–871 are Cytoplasmic-facing; it reads SVPDTFASKVAATQDQYADASIGNVTGSN. Residues 872–892 traverse the membrane as a helical segment; it reads AVNVFLGIGVAWSIAAIYHAA. Topologically, residues 893 to 903 are extracellular; that stretch reads NGEQFKVSPGT. A helical membrane pass occupies residues 904–924; that stretch reads LAFSVTLFTIFAFINVGVLLY. Residues 925–941 lie on the Cytoplasmic side of the membrane; that stretch reads RRRPEIGGELGGPRTAK. A helical transmembrane segment spans residues 942–962; the sequence is LLTSCLFVLLWLLYIFFSSLE. Residues 963–970 lie on the Extracellular side of the membrane; sequence AYCHIKGF.

The protein belongs to the Ca(2+):cation antiporter (CaCA) (TC 2.A.19) family. SLC8 subfamily. In terms of tissue distribution, detected in heart (at protein level). Detected in heart.

It is found in the cell membrane. It carries out the reaction Ca(2+)(in) + 3 Na(+)(out) = Ca(2+)(out) + 3 Na(+)(in). Activated by micromolar levels of Ca(2+). In terms of biological role, mediates the exchange of one Ca(2+) ion against three to four Na(+) ions across the cell membrane, and thereby contributes to the regulation of cytoplasmic Ca(2+) levels and Ca(2+)-dependent cellular processes. Contributes to Ca(2+) transport during excitation-contraction coupling in muscle. In a first phase, voltage-gated channels mediate the rapid increase of cytoplasmic Ca(2+) levels due to release of Ca(2+) stores from the endoplasmic reticulum. SLC8A1 mediates the export of Ca(2+) from the cell during the next phase, so that cytoplasmic Ca(2+) levels rapidly return to baseline. Required for normal embryonic heart development and the onset of heart contractions. The polypeptide is Sodium/calcium exchanger 1 (SLC8A1) (Felis catus (Cat)).